Consider the following 439-residue polypeptide: Tol-Pal system protein TolB (439 aa).

The signal sequence occupies residues Met-1–Ala-22.

It belongs to the TolB family. The Tol-Pal system is composed of five core proteins: the inner membrane proteins TolA, TolQ and TolR, the periplasmic protein TolB and the outer membrane protein Pal. They form a network linking the inner and outer membranes and the peptidoglycan layer.

The protein resides in the periplasm. Part of the Tol-Pal system, which plays a role in outer membrane invagination during cell division and is important for maintaining outer membrane integrity. This Xanthomonas oryzae pv. oryzae (strain KACC10331 / KXO85) protein is Tol-Pal system protein TolB.